Reading from the N-terminus, the 129-residue chain is Small ribosomal subunit protein uS13 (129 aa).

Residues 92 to 114 (HKHNLPVRGQRTKTNARTRRGPR) are compositionally biased toward basic residues. Residues 92 to 129 (HKHNLPVRGQRTKTNARTRRGPRKTVAGRGQKRGATKK) form a disordered region.

The protein belongs to the universal ribosomal protein uS13 family. In terms of assembly, part of the 30S ribosomal subunit. Forms a loose heterodimer with protein S19. Forms two bridges to the 50S subunit in the 70S ribosome.

Located at the top of the head of the 30S subunit, it contacts several helices of the 16S rRNA. In the 70S ribosome it contacts the 23S rRNA (bridge B1a) and protein L5 of the 50S subunit (bridge B1b), connecting the 2 subunits; these bridges are implicated in subunit movement. Contacts the tRNAs in the A and P-sites. This chain is Small ribosomal subunit protein uS13, found in Dehalococcoides mccartyi (strain ATCC BAA-2266 / KCTC 15142 / 195) (Dehalococcoides ethenogenes (strain 195)).